Consider the following 556-residue polypeptide: Glypican-4 (556 aa).

A signal peptide spans 1-18; the sequence is MARFGLPALLCTLAVLSA. Ser357 carries the phosphoserine modification. O-linked (Xyl...) (glycosaminoglycan) serine glycosylation is found at Ser494, Ser498, and Ser500. N-linked (GlcNAc...) asparagine glycosylation is present at Asn514. Ser529 carries the GPI-anchor amidated serine lipid modification. A propeptide spans 530–556 (removed in mature form); sequence AGVRPGAQAYLLTVFCILFLVMQREWR.

It belongs to the glypican family.

It is found in the cell membrane. It localises to the secreted. The protein localises to the extracellular space. In terms of biological role, cell surface proteoglycan that bears heparan sulfate. May be involved in the development of kidney tubules and of the central nervous system. This Homo sapiens (Human) protein is Glypican-4 (GPC4).